Here is a 650-residue protein sequence, read N- to C-terminus: DNA gyrase subunit B (650 aa).

Residues 400–414 (RRSQEARELTRRKSP) show a composition bias toward basic and acidic residues. A disordered region spans residues 400-422 (RRSQEARELTRRKSPFDSGSLPG). The Toprim domain maps to 435 to 549 (SELYIVEGDS…QGNIYIAQPP (115 aa)). 3 residues coordinate Mg(2+): glutamate 441, aspartate 514, and aspartate 516.

Belongs to the type II topoisomerase GyrB family. In terms of assembly, heterotetramer, composed of two GyrA and two GyrB chains. In the heterotetramer, GyrA contains the active site tyrosine that forms a transient covalent intermediate with DNA, while GyrB binds cofactors and catalyzes ATP hydrolysis. Requires Mg(2+) as cofactor. Mn(2+) serves as cofactor. The cofactor is Ca(2+).

Its subcellular location is the cytoplasm. The catalysed reaction is ATP-dependent breakage, passage and rejoining of double-stranded DNA.. In terms of biological role, a type II topoisomerase that negatively supercoils closed circular double-stranded (ds) DNA in an ATP-dependent manner to modulate DNA topology and maintain chromosomes in an underwound state. Negative supercoiling favors strand separation, and DNA replication, transcription, recombination and repair, all of which involve strand separation. Also able to catalyze the interconversion of other topological isomers of dsDNA rings, including catenanes and knotted rings. Type II topoisomerases break and join 2 DNA strands simultaneously in an ATP-dependent manner. The chain is DNA gyrase subunit B from Mycoplasma pneumoniae (strain ATCC 29342 / M129 / Subtype 1) (Mycoplasmoides pneumoniae).